Reading from the N-terminus, the 268-residue chain is L-aspartate dehydrogenase (268 aa).

Alanine 125 and asparagine 191 together coordinate NAD(+). Histidine 221 is an active-site residue.

The protein belongs to the L-aspartate dehydrogenase family.

The catalysed reaction is L-aspartate + NADP(+) + H2O = oxaloacetate + NH4(+) + NADPH + H(+). The enzyme catalyses L-aspartate + NAD(+) + H2O = oxaloacetate + NH4(+) + NADH + H(+). It participates in cofactor biosynthesis; NAD(+) biosynthesis; iminoaspartate from L-aspartate (dehydrogenase route): step 1/1. Specifically catalyzes the NAD or NADP-dependent dehydrogenation of L-aspartate to iminoaspartate. This Ralstonia nicotianae (strain ATCC BAA-1114 / GMI1000) (Ralstonia solanacearum) protein is L-aspartate dehydrogenase.